Here is a 292-residue protein sequence, read N- to C-terminus: Undecaprenyl-diphosphatase (292 aa).

The next 7 helical transmembrane spans lie at 1-21 (MSLVSAALFGLLQALTEFLPV), 46-66 (FVTIIQAGTTLAVLVYFRADI), 90-110 (LGWYIVLGTLPAALAGKLLEH), 114-134 (ALGNWVIAGSLVALGLVLLAA), 192-212 (FLLSVPITLAAGAYKLWSTVP), 225-245 (VVGTVVSAVAGYLVIDWLLAW), and 253-273 (VFVVWRLAAGAAIAALILSGV).

This sequence belongs to the UppP family.

The protein localises to the cell inner membrane. It carries out the reaction di-trans,octa-cis-undecaprenyl diphosphate + H2O = di-trans,octa-cis-undecaprenyl phosphate + phosphate + H(+). Catalyzes the dephosphorylation of undecaprenyl diphosphate (UPP). Confers resistance to bacitracin. The sequence is that of Undecaprenyl-diphosphatase from Anaeromyxobacter sp. (strain K).